Consider the following 629-residue polypeptide: Mitochondrial Rho GTPase 1 (629 aa).

The Cytoplasmic segment spans residues 1-600 (MSTAVRICVC…PRSEEPPADR (600 aa)). In terms of domain architecture, Miro 1 spans 2–170 (STAVRICVCG…FYLCQKAVTH (169 aa)). GTP-binding positions include 11–18 (GDEGTGKS), 59–63 (DTSAR), and 115–118 (NKSD). EF-hand domains are found at residues 186-221 (ACVD…SFDK) and 306-341 (AGYR…TPGL). The Ca(2+) site is built by D199, D201, D203, Y205, E210, D319, D321, D323, and E330. Positions 421–585 (RNVVLCYILG…FVALAEAATN (165 aa)) constitute a Miro 2 domain. GTP contacts are provided by residues 430–437 (GSSGAGKS), 466–470 (ELQGG), and 535–538 (LKAD). A helical; Anchor for type IV membrane protein transmembrane segment spans residues 601–621 (ASLYMALGATACAALAAFMIW). The Mitochondrial intermembrane portion of the chain corresponds to 622 to 629 (RRSTSNAA).

Belongs to the mitochondrial Rho GTPase family.

Its subcellular location is the mitochondrion outer membrane. In terms of biological role, mitochondrial GTPase involved in mitochondrial trafficking. Probably involved in control of anterograde transport of mitochondria and their subcellular distribution. In Neurospora crassa (strain ATCC 24698 / 74-OR23-1A / CBS 708.71 / DSM 1257 / FGSC 987), this protein is Mitochondrial Rho GTPase 1 (gem-1).